Reading from the N-terminus, the 109-residue chain is Cell division protein FtsL (109 aa).

Over 1-3 the chain is Cytoplasmic; it reads MSR. A helical transmembrane segment spans residues 4 to 21; that stretch reads LNIFLLIIVMGCALSVVN. Over 22 to 109 the chain is Periplasmic; the sequence is STNQQRQIFI…ASAAPTGGAR (88 aa).

Belongs to the FtsL family. Part of a complex composed of FtsB, FtsL and FtsQ.

It is found in the cell inner membrane. Essential cell division protein. May link together the upstream cell division proteins, which are predominantly cytoplasmic, with the downstream cell division proteins, which are predominantly periplasmic. The sequence is that of Cell division protein FtsL from Burkholderia pseudomallei (strain K96243).